Here is a 208-residue protein sequence, read N- to C-terminus: Cysteine-rich protein 2 (208 aa).

The 53-residue stretch at 5–57 (CPKCDKTVYFAEKVSSLGKDWHKFCLKCERCSKTLTPGGHAEHDGKPFCHKPC) folds into the LIM zinc-binding 1 domain. Position 23 is an N6-acetyllysine (Lys-23). The segment at 98-119 (AEERKASGPPKGPSRASSVTTF) is disordered. At Ser-104 the chain carries Phosphoserine. One can recognise an LIM zinc-binding 2 domain in the interval 126-178 (CPRCSKKVYFAEKVTSLGKDWHRPCLRCERCGKTLTPGGHAEHDGQPYCHKPC). N6-acetyllysine is present on residues Lys-138 and Lys-144.

Interacts with TGFB1I1. As to expression, widespread tissue expression; highest levels in the heart.

In Homo sapiens (Human), this protein is Cysteine-rich protein 2 (CRIP2).